Here is a 412-residue protein sequence, read N- to C-terminus: Branched-chain alpha-ketoacid dehydrogenase kinase (412 aa).

The N-terminal 30 residues, 1 to 30 (MILASVLGSGPRGGPPLRPLLGPALSLRAR), are a transit peptide targeting the mitochondrion. Residue S31 is modified to Phosphoserine. At S52 the chain carries Phosphoserine; by autocatalysis. A Histidine kinase domain is found at 159 to 404 (LDDHKDVVTL…DVYLRLRHID (246 aa)). Residues K192 and K233 each carry the N6-acetyllysine modification. Residues N279 and D315 each contribute to the ATP site. N279 contributes to the Mg(2+) binding site. Residues V328, D330, and F333 each contribute to the K(+) site. T334 and T335 together coordinate ATP. 2 positions are modified to phosphoserine: S356 and S360. H364, G367, and L370 together coordinate ATP. Residue G367 coordinates K(+).

It belongs to the PDK/BCKDK protein kinase family. In terms of assembly, homodimer. Homotetramer. Dimerizes through interaction of two opposing nucleotide-binding domains. Interacts with E2 component of the branched-chain alpha-ketoacid dehydrogenase (BCKDH) complex. Competes with BCKDK for binding to the E2 component; this interaction is modulated by branched-chain alpha-keto acids. At steady state, BCKDH holoenzyme contains BCKDK and BCKDHA is phosphorylated. In response to high levels of branched-chain alpha-keto acids, the inhibitory BCKDK is replaced by activating PPM1K leading to BCKDHA dephosphorylation and BCAA degradation. Autophosphorylated.

It is found in the mitochondrion matrix. Its subcellular location is the mitochondrion. The enzyme catalyses L-seryl-[3-methyl-2-oxobutanoate dehydrogenase] + ATP = O-phospho-L-seryl-[3-methyl-2-oxobutanoate dehydrogenase] + ADP + H(+). It catalyses the reaction L-seryl-[protein] + ATP = O-phospho-L-seryl-[protein] + ADP + H(+). Functionally, serine/threonine-protein kinase component of macronutrients metabolism. Forms a functional kinase and phosphatase pair with PPM1K, serving as a metabolic regulatory node that coordinates branched-chain amino acids (BCAAs) with glucose and lipid metabolism via two distinct phosphoprotein targets: mitochondrial BCKDHA subunit of the branched-chain alpha-ketoacid dehydrogenase (BCKDH) complex and cytosolic ACLY, a lipogenic enzyme of Krebs cycle. Phosphorylates and inactivates mitochondrial BCKDH complex a multisubunit complex consisting of three multimeric components each involved in different steps of BCAA catabolism: E1 composed of BCKDHA and BCKDHB, E2 core composed of DBT monomers, and E3 composed of DLD monomers. Associates with the E2 component of BCKDH complex and phosphorylates BCKDHA on Ser-347, leading to conformational changes that interrupt substrate channeling between E1 and E2 and inactivates the BCKDH complex. Phosphorylates ACLY on Ser-455 in response to changes in cellular carbohydrate abundance such as occurs during fasting to feeding metabolic transition. Refeeding stimulates MLXIPL/ChREBP transcription factor, leading to increased BCKDK to PPM1K expression ratio, phosphorylation and activation of ACLY that ultimately results in the generation of malonyl-CoA and oxaloacetate immediate substrates of de novo lipogenesis and glucogenesis, respectively. Recognizes phosphosites having SxxE/D canonical motif. The sequence is that of Branched-chain alpha-ketoacid dehydrogenase kinase (BCKDK) from Bos taurus (Bovine).